The primary structure comprises 321 residues: NADH-ubiquinone oxidoreductase chain 1 (321 aa).

A run of 8 helical transmembrane segments spans residues 9–29 (ITNS…LTLL), 75–95 (ILFT…WAPM), 106–126 (LGLL…LWSG), 151–171 (TLGL…LMLF), 177–197 (HMWL…STLA), 219–239 (VEFS…NILF), 256–276 (PQLF…LFLW), and 297–317 (YLPL…ALCG).

This sequence belongs to the complex I subunit 1 family.

The protein resides in the mitochondrion inner membrane. It catalyses the reaction a ubiquinone + NADH + 5 H(+)(in) = a ubiquinol + NAD(+) + 4 H(+)(out). Its function is as follows. Core subunit of the mitochondrial membrane respiratory chain NADH dehydrogenase (Complex I) that is believed to belong to the minimal assembly required for catalysis. Complex I functions in the transfer of electrons from NADH to the respiratory chain. The immediate electron acceptor for the enzyme is believed to be ubiquinone. The chain is NADH-ubiquinone oxidoreductase chain 1 (MT-ND1) from Lycodon semicarinatus (Ryukyu odd-tooth snake).